A 75-amino-acid polypeptide reads, in one-letter code: UPF0352 protein ASA_2693 (75 aa).

It belongs to the UPF0352 family.

In Aeromonas salmonicida (strain A449), this protein is UPF0352 protein ASA_2693.